Here is a 464-residue protein sequence, read N- to C-terminus: ATP synthase subunit beta (464 aa).

Position 152-159 (152-159) interacts with ATP; it reads GGAGVGKT.

It belongs to the ATPase alpha/beta chains family. In terms of assembly, F-type ATPases have 2 components, CF(1) - the catalytic core - and CF(0) - the membrane proton channel. CF(1) has five subunits: alpha(3), beta(3), gamma(1), delta(1), epsilon(1). CF(0) has three main subunits: a(1), b(2) and c(9-12). The alpha and beta chains form an alternating ring which encloses part of the gamma chain. CF(1) is attached to CF(0) by a central stalk formed by the gamma and epsilon chains, while a peripheral stalk is formed by the delta and b chains.

Its subcellular location is the cell membrane. It carries out the reaction ATP + H2O + 4 H(+)(in) = ADP + phosphate + 5 H(+)(out). Its function is as follows. Produces ATP from ADP in the presence of a proton gradient across the membrane. The catalytic sites are hosted primarily by the beta subunits. This Ureaplasma parvum serovar 3 (strain ATCC 27815 / 27 / NCTC 11736) protein is ATP synthase subunit beta.